The chain runs to 156 residues: Ribosomal RNA large subunit methyltransferase H (156 aa).

S-adenosyl-L-methionine is bound by residues L73, G104, and 123–128; that span reads LSALTM.

The protein belongs to the RNA methyltransferase RlmH family. As to quaternary structure, homodimer.

Its subcellular location is the cytoplasm. It catalyses the reaction pseudouridine(1915) in 23S rRNA + S-adenosyl-L-methionine = N(3)-methylpseudouridine(1915) in 23S rRNA + S-adenosyl-L-homocysteine + H(+). Functionally, specifically methylates the pseudouridine at position 1915 (m3Psi1915) in 23S rRNA. The chain is Ribosomal RNA large subunit methyltransferase H from Tolumonas auensis (strain DSM 9187 / NBRC 110442 / TA 4).